Consider the following 111-residue polypeptide: Iron-sulfur cluster insertion protein ErpA (111 aa).

Positions 39, 103, and 105 each coordinate iron-sulfur cluster.

Belongs to the HesB/IscA family. As to quaternary structure, homodimer. The cofactor is iron-sulfur cluster.

Functionally, required for insertion of 4Fe-4S clusters for at least IspG. This Acinetobacter baumannii (strain SDF) protein is Iron-sulfur cluster insertion protein ErpA.